A 561-amino-acid chain; its full sequence is MSSPYGKVDEREHVRLEARRKTRKNIAIIAVSLVILAGIVIGAVFGTMAHKKSPETVETNNNGDSISVSVKAVCDVTLHKEKCFETLGSAPNASSLNPEELFRYAVKITIAEVSKAINAFSSSLGDEKNNITMNACAELLDLTIDNLNNTLTSSSNGDVTVPELVDDLRTWLSSAGTYQRTCVETLAPDMRPFGESHLKNSTELTSNALAIITWLGKIADSFKLRRRLLTTADVEVDFHAGRRLLQSTDLRKVADIVVAKDGSGKYRTIKRALQDVPEKSEKRTIIYVKKGVYFENVKVEKKMWNVIVVGDGESKSIVSGRLNVIDGTPTFKTATFAVFGKGFMARDMGFINTAGPSKHQAVALMVSADLTAFYRCTMNAYQDTLYVHAQRQFYRECTIIGTVDFIFGNSASVLQSCRILPRRPMKGQQNTITAQGRTDPNMNTGISIHRCNISPLGDLTDVMTFLGRPWKNFSTTVIMDSYLHGFIDRKGWLPWTGDSAPDTIFYGEYKNTGPGASTKNRVKWKGLRFLSTKEANRFTVKPFIDGGRWLPATKVPFRSGL.

The chain crosses the membrane as a helical span at residues Ile26–Gly46. Positions Asp64–Ile211 are pectinesterase inhibitor 24. Residues Asn92, Asn130, Asn148, and Asn200 are each glycosylated (N-linked (GlcNAc...) asparagine). The pectinesterase 24 stretch occupies residues Asp255–Arg548. Residues Thr330 and Gln360 each coordinate substrate. Asp383 functions as the Proton donor; for pectinesterase activity in the catalytic mechanism. Cys397 and Cys417 are oxidised to a cystine. Asp404 functions as the Nucleophile; for pectinesterase activity in the catalytic mechanism. Positions 468 and 470 each coordinate substrate. An N-linked (GlcNAc...) asparagine glycan is attached at Asn472.

This sequence in the N-terminal section; belongs to the PMEI family. It in the C-terminal section; belongs to the pectinesterase family.

Its subcellular location is the membrane. It carries out the reaction [(1-&gt;4)-alpha-D-galacturonosyl methyl ester](n) + n H2O = [(1-&gt;4)-alpha-D-galacturonosyl](n) + n methanol + n H(+). It participates in glycan metabolism; pectin degradation; 2-dehydro-3-deoxy-D-gluconate from pectin: step 1/5. Acts in the modification of cell walls via demethylesterification of cell wall pectin. This chain is Putative pectinesterase/pectinesterase inhibitor 24 (PME24), found in Arabidopsis thaliana (Mouse-ear cress).